Reading from the N-terminus, the 558-residue chain is Receptor-like kinase LIP2 (558 aa).

The interval 1–45 is disordered; the sequence is MHCFPCFSSPKNKKSSTTNETNDNNEPKPDDRRRAEETEEIEQSE. Over residues 15 to 24 the composition is skewed to low complexity; sequence SSTTNETNDN. A compositionally biased stretch (basic and acidic residues) spans 25–36; the sequence is NEPKPDDRRRAE. Thr-53 bears the Phosphothreonine mark. The Protein kinase domain occupies 64 to 343; it reads FRQECLLGEG…SDVMVALSFL (280 aa). ATP is bound by residues 70 to 78 and Lys-93; that span reads LGEGGFGRV. Tyr-138 carries the post-translational modification Phosphotyrosine. Asp-191 serves as the catalytic Proton acceptor. Residues Ser-195 and Ser-227 each carry the phosphoserine modification. Position 233 is a phosphothreonine (Thr-233). Tyr-241 carries the phosphotyrosine modification. The segment at 372–558 is disordered; sequence HDSNLVSPPP…SDVAIDSIKE (187 aa). Residues 401–418 show a composition bias toward basic and acidic residues; sequence ESEKESVSKNEYKKKHEE. Residues 419–431 are compositionally biased toward acidic residues; the sequence is EDSSMESDDESDS. A compositionally biased stretch (basic and acidic residues) spans 432-448; sequence NSEHEKDQPPKPIDEKN. A compositionally biased stretch (low complexity) spans 473 to 486; that stretch reads SKSSQKSNDESTSS. Composition is skewed to basic and acidic residues over residues 488 to 500, 508 to 524, and 547 to 558; these read YDSD…KGKE, EEKH…KTDD, and IKSDVAIDSIKE.

Belongs to the protein kinase superfamily. Ser/Thr protein kinase family. In terms of assembly, interacts with PRK6. Palmitoylated. In terms of tissue distribution, expressed in mature pollen and in germinating pollen tubes.

It is found in the cell membrane. Involved in pollen tube guidance into micropyle. Participates in perception of the ovule-secreted peptide signal LURE1. This is Receptor-like kinase LIP2 from Arabidopsis thaliana (Mouse-ear cress).